A 358-amino-acid chain; its full sequence is UDP-N-acetylglucosamine--N-acetylmuramyl-(pentapeptide) pyrophosphoryl-undecaprenol N-acetylglucosamine transferase (358 aa).

UDP-N-acetyl-alpha-D-glucosamine-binding residues include serine 196 and glutamine 287.

Belongs to the glycosyltransferase 28 family. MurG subfamily.

Its subcellular location is the cell membrane. The catalysed reaction is Mur2Ac(oyl-L-Ala-gamma-D-Glu-L-Lys-D-Ala-D-Ala)-di-trans,octa-cis-undecaprenyl diphosphate + UDP-N-acetyl-alpha-D-glucosamine = beta-D-GlcNAc-(1-&gt;4)-Mur2Ac(oyl-L-Ala-gamma-D-Glu-L-Lys-D-Ala-D-Ala)-di-trans,octa-cis-undecaprenyl diphosphate + UDP + H(+). It participates in cell wall biogenesis; peptidoglycan biosynthesis. Functionally, cell wall formation. Catalyzes the transfer of a GlcNAc subunit on undecaprenyl-pyrophosphoryl-MurNAc-pentapeptide (lipid intermediate I) to form undecaprenyl-pyrophosphoryl-MurNAc-(pentapeptide)GlcNAc (lipid intermediate II). The protein is UDP-N-acetylglucosamine--N-acetylmuramyl-(pentapeptide) pyrophosphoryl-undecaprenol N-acetylglucosamine transferase of Streptococcus uberis (strain ATCC BAA-854 / 0140J).